The sequence spans 386 residues: Leupaxin (386 aa).

An N-acetylmethionine modification is found at Met1. The short motif at 3-15 (ELDALLEELERST) is the LD motif 1 element. The segment at 13–41 (RSTLQDSDEYSNPAPLPLDQHSRKETNLD) is disordered. Position 19 is a phosphoserine (Ser19). Tyr22 carries the post-translational modification Phosphotyrosine. Ser54 carries the phosphoserine modification. A Phosphotyrosine modification is found at Tyr62. 2 consecutive short sequence motifs (LD motif) follow at residues 70–82 (NVYSEAQEPKESP) and 92–103 (QLDELMAHLTEM). Phosphotyrosine; by LYN is present on Tyr72. The residue at position 81 (Ser81) is a Phosphoserine. LIM zinc-binding domains lie at 150–208 (GHCA…QLFS), 209–267 (PRCA…AMFS), 268–326 (PKCG…HRRG), and 327–386 (TLCH…LFPL).

This sequence belongs to the paxillin family. As to quaternary structure, interacts with PTPN22. Interacts with unphosphorylated ITGA4. Interacts with PTK2B/PYK2, PTPN12, AR and SRF. Interacts (via LD motif 3) with LYN and the interaction is induced upon B-cell antigen receptor (BCR) activation. Interacts (via LD motif 3) with PTK2/FAK. In terms of processing, phosphorylated on tyrosine residues. Phosphorylation on Tyr-72 is important for its inhibitory function. Bombesin stimulates phosphorylation on Tyr-22, Tyr-62 and Tyr-72. Macrophages, monocytes and osteoclasts (at protein level). Strongly expressed in cells and tissues of hematopoietic origin. Highest expression in lymphoid tissues such as spleen, lymph node, thymus and appendix and in the vascular smooth muscle. Lower levels in bone marrow and fetal liver. Also expressed in peripheral blood lymphocytes and a number of hematopoietic cell lines. Very low levels found in epithelial cell lines. Expressed in prostate cancer (PCa) cells and its expression intensity is directly linked to PCa progression.

It is found in the cytoplasm. The protein localises to the cell junction. The protein resides in the focal adhesion. Its subcellular location is the nucleus. It localises to the perinuclear region. It is found in the cell projection. The protein localises to the podosome. The protein resides in the cell membrane. Its function is as follows. Transcriptional coactivator for androgen receptor (AR) and serum response factor (SRF). Contributes to the regulation of cell adhesion, spreading and cell migration and acts as a negative regulator in integrin-mediated cell adhesion events. Suppresses the integrin-induced tyrosine phosphorylation of paxillin (PXN). May play a critical role as an adapter protein in the formation of the adhesion zone in osteoclasts. Negatively regulates B-cell antigen receptor (BCR) signaling. The polypeptide is Leupaxin (LPXN) (Homo sapiens (Human)).